A 530-amino-acid polypeptide reads, in one-letter code: UDP-glucuronosyltransferase 1A8 (530 aa).

A signal peptide spans 1-25 (MARTGWTSPIPLCVSLLLTCGFAEA). Residues N71, N292, and N344 are each glycosylated (N-linked (GlcNAc...) asparagine). A helical membrane pass occupies residues 488–504 (VIGFLLAVVLTVAFITF).

The protein belongs to the UDP-glycosyltransferase family. Homodimer. Homooligomer. Interacts with UGT1A1, UGT1A3, UGT1A4, UGT1A6, UGT1A7, UGT1A9 and UGT1A10 to form heterodimers. Isoform 1 interacts with isoform 2/i2 suggesting that oligomerization is involved in negative regulation of transferase activity by isoform 2. Isoform 1 also interacts with respective i2 isoforms of UGT1A1, UGT1A3, UGT1A4, UGT1A6, UGT1A7, UGT1A9 and UGT1A10. As to expression, expressed in kidney, colon and small intestine. Not expressed in liver. In terms of tissue distribution, expressed in liver, kidney, colon and small intestine.

Its subcellular location is the endoplasmic reticulum membrane. It catalyses the reaction glucuronate acceptor + UDP-alpha-D-glucuronate = acceptor beta-D-glucuronoside + UDP + H(+). The enzyme catalyses 17beta-estradiol + UDP-alpha-D-glucuronate = 17beta-estradiol 3-O-(beta-D-glucuronate) + UDP + H(+). The catalysed reaction is 17alpha-estradiol + UDP-alpha-D-glucuronate = 17alpha-estradiol 3-O-(beta-D-glucuronate) + UDP + H(+). It carries out the reaction estrone + UDP-alpha-D-glucuronate = estrone 3-O-(beta-D-glucuronate) + UDP + H(+). It catalyses the reaction 16alpha,17alpha-estriol + UDP-alpha-D-glucuronate = 16alpha,17alpha-estriol 3-O-(beta-D-glucuronate) + UDP + H(+). The enzyme catalyses 2-hydroxy-17beta-estradiol + UDP-alpha-D-glucuronate = 2-hydroxy-17beta-estradiol 3-O-(beta-D-glucuronate) + UDP + H(+). The catalysed reaction is 2-hydroxy-17beta-estradiol + UDP-alpha-D-glucuronate = 17beta-estradiol 2-O-(beta-D-glucuronate) + UDP + H(+). It carries out the reaction 2-hydroxyestrone + UDP-alpha-D-glucuronate = 2-hydroxyestrone 3-O-(beta-D-glucuronate) + UDP + H(+). It catalyses the reaction 4-hydroxy-17beta-estradiol + UDP-alpha-D-glucuronate = 4-hydroxy-17beta-estradiol 3-O-(beta-D-glucuronate) + UDP + H(+). The enzyme catalyses 4-hydroxy-17beta-estradiol + UDP-alpha-D-glucuronate = 17beta-estradiol 4-O-(beta-D-glucuronate) + UDP + H(+). The catalysed reaction is 4-hydroxyestrone + UDP-alpha-D-glucuronate = 4-hydroxyestrone 3-O-(beta-D-glucuronate) + UDP + H(+). It carries out the reaction 4-hydroxyestrone + UDP-alpha-D-glucuronate = estrone 4-O-(beta-D-glucuronate) + UDP + H(+). It catalyses the reaction 2-methoxy-17beta-estradiol + UDP-alpha-D-glucuronate = 2-methoxy-17beta-estradiol 3-O-(beta-D-glucuronate) + UDP + H(+). The enzyme catalyses 2-methoxyestrone + UDP-alpha-D-glucuronate = 2-methoxyestrone 3-O-(beta-D-glucuronate) + UDP + H(+). The catalysed reaction is 4-methoxy-17beta-estradiol + UDP-alpha-D-glucuronate = 4-methoxy-17beta-estradiol 3-O-(beta-D-glucuronate) + UDP + H(+). It carries out the reaction 4-methoxyestrone + UDP-alpha-D-glucuronate = 4-methoxyestrone 3-O-(beta-D-glucuronate) + UDP + H(+). It catalyses the reaction 17beta-hydroxy-5alpha-androstan-3-one + UDP-alpha-D-glucuronate = 5alpha-dihydrotestosterone 17-O-(beta-D-glucuronate) + UDP + H(+). The enzyme catalyses 5alpha-dihydrotestosterone 17-O-(beta-D-glucuronate) + UDP-alpha-D-glucuronate = 5alpha-dihydrotestosterone 17-O-[beta-D-glucuronosyl-(1-&gt;2)-glucuronate] + UDP + H(+). The catalysed reaction is prunetin + UDP-alpha-D-glucuronate = prunetin-4'-O-beta-D-glucuronide + UDP. It carries out the reaction prunetin + UDP-alpha-D-glucuronate = prunetin-5-O-beta-D-glucuronide + UDP. It catalyses the reaction candesartan + UDP-alpha-D-glucuronate = candesartan O-beta-D-glucuronoside + UDP. The enzyme catalyses mycophenolate + UDP-alpha-D-glucuronate = mycophenolate 7-O-beta-D-glucuronide + UDP + H(+). The catalysed reaction is (E)-ferulate + UDP-alpha-D-glucuronate = (E)-4-O-(beta-D-glucuronosyl)-ferulate + UDP + H(+). It carries out the reaction (E)-ferulate + UDP-alpha-D-glucuronate = (E)-ferulic acid beta-D-glucuronate ester + UDP. Functionally, UDP-glucuronosyltransferase (UGT) that catalyzes phase II biotransformation reactions in which lipophilic substrates are conjugated with glucuronic acid to increase the metabolite's water solubility, thereby facilitating excretion into either the urine or bile. Essential for the elimination and detoxification of drugs, xenobiotics and endogenous compounds. Catalyzes the glucuronidation of endogenous steroid hormones such as androgens and estrogens. Produces dihydrotestosterone (DHT) diglucuronide from the DHT after two subsequent glucoronidation steps. Involved in the glucuronidation of the phytochemical ferulic acid at the phenolic or the carboxylic acid group. Also catalyzes the glucuronidation of the isoflavones genistein, daidzein, glycitein, formononetin, biochanin A and prunetin, which are phytoestrogens with anticancer and cardiovascular properties. Involved in the glucuronidation of the AGTR1 angiotensin receptor antagonist caderastan, a drug which can inhibit the effect of angiotensin II. Also metabolizes mycophenolate, an immunosuppressive agent. Lacks UGT glucuronidation activity but acts as a negative regulator of isoform 1. The protein is UDP-glucuronosyltransferase 1A8 of Homo sapiens (Human).